The chain runs to 152 residues: MESKIRNYYAVKVTGGQEVSVGLMLEERAKTNNIPEIYSIIVPPGLKGYVIVEASGPHVVKLLIAGIRHVRGIAQGLVPKDHIVKMVSKKVTGPTIKEGDLVEVVSGPFRGMQAQVVKVTEGKGEVVLNILESAFPLQVTIPVDQVKPVKKT.

Positions 98–127 (EGDLVEVVSGPFRGMQAQVVKVTEGKGEVV) constitute a KOW domain.

This sequence belongs to the archaeal Spt5 family. As to quaternary structure, heterodimer composed of Spt4 and Spt5. Interacts with RNA polymerase (RNAP).

In terms of biological role, stimulates transcription elongation. This chain is Transcription elongation factor Spt5, found in Acidianus ambivalens (Desulfurolobus ambivalens).